The sequence spans 182 residues: Mu-like prophage FluMu protein gp45 (182 aa).

The tract at residues 159 to 182 is disordered; the sequence is TDHQSSGISGKNHDHEERVGKPVP. Over residues 169-182 the composition is skewed to basic and acidic residues; it reads KNHDHEERVGKPVP.

The protein to phage Mu protein gp45.

This Haemophilus influenzae (strain ATCC 51907 / DSM 11121 / KW20 / Rd) protein is Mu-like prophage FluMu protein gp45.